Here is a 784-residue protein sequence, read N- to C-terminus: ATP-dependent zinc metalloprotease FTSH 9, chloroplastic/mitochondrial (784 aa).

3 stretches are compositionally biased toward low complexity: residues 1–12, 24–34, and 42–53; these read MSALQASLLLRP, PLPSSSASFPR, and PLPLRALASEGP. Residues 1–47 constitute a chloroplast and mitochondrion transit peptide; sequence MSALQASLLLRPLPSPLPPRRRLPLPSSSASFPRAGHHRRLPLPLRA. Positions 1–71 are disordered; that stretch reads MSALQASLLL…DPPPPELPAA (71 aa). Residues 54–69 are compositionally biased toward pro residues; that stretch reads QPAPSPAPDPPPPELP. 2 helical membrane passes run 104–124 and 267–287; these read WVLALAAAVVAAARRFFDWVV and IFSTVLFTIAVGLMWVMGAAA. ATP is bound at residue 368-375; sequence GSPGTGKT. His601 provides a ligand contact to Zn(2+). Glu602 is a catalytic residue. Zn(2+) contacts are provided by His605 and Asp679.

This sequence in the N-terminal section; belongs to the AAA ATPase family. It in the C-terminal section; belongs to the peptidase M41 family. Requires Zn(2+) as cofactor.

Its subcellular location is the mitochondrion membrane. It localises to the plastid. It is found in the chloroplast thylakoid membrane. Probable ATP-dependent zinc metallopeptidase. This Oryza sativa subsp. japonica (Rice) protein is ATP-dependent zinc metalloprotease FTSH 9, chloroplastic/mitochondrial (FTSH9).